Consider the following 557-residue polypeptide: Hydroxylamine reductase (557 aa).

[4Fe-4S] cluster contacts are provided by Cys3, Cys6, Cys19, and Cys26. Residues His253, Glu277, Cys321, Cys408, Cys436, Cys461, Glu495, and Lys497 each coordinate hybrid [4Fe-2O-2S] cluster. Cys408 bears the Cysteine persulfide mark.

Belongs to the HCP family. Requires [4Fe-4S] cluster as cofactor. The cofactor is hybrid [4Fe-2O-2S] cluster.

The protein resides in the cytoplasm. It catalyses the reaction A + NH4(+) + H2O = hydroxylamine + AH2 + H(+). In terms of biological role, catalyzes the reduction of hydroxylamine to form NH(3) and H(2)O. The protein is Hydroxylamine reductase of Acidiphilium cryptum (strain JF-5).